Here is a 608-residue protein sequence, read N- to C-terminus: 1-deoxy-D-xylulose-5-phosphate synthase (608 aa).

Thiamine diphosphate-binding positions include His-80 and 121–123 (GHS). Asp-152 contributes to the Mg(2+) binding site. Thiamine diphosphate is bound by residues 153-154 (GA), Asn-181, Tyr-282, and Glu-357. Asn-181 is a Mg(2+) binding site.

The protein belongs to the transketolase family. DXPS subfamily. As to quaternary structure, homodimer. Requires Mg(2+) as cofactor. The cofactor is thiamine diphosphate.

It catalyses the reaction D-glyceraldehyde 3-phosphate + pyruvate + H(+) = 1-deoxy-D-xylulose 5-phosphate + CO2. It participates in metabolic intermediate biosynthesis; 1-deoxy-D-xylulose 5-phosphate biosynthesis; 1-deoxy-D-xylulose 5-phosphate from D-glyceraldehyde 3-phosphate and pyruvate: step 1/1. Its function is as follows. Catalyzes the acyloin condensation reaction between C atoms 2 and 3 of pyruvate and glyceraldehyde 3-phosphate to yield 1-deoxy-D-xylulose-5-phosphate (DXP). The polypeptide is 1-deoxy-D-xylulose-5-phosphate synthase (Buchnera aphidicola subsp. Acyrthosiphon pisum (strain 5A)).